We begin with the raw amino-acid sequence, 518 residues long: NADH-quinone oxidoreductase subunit N (518 aa).

Helical transmembrane passes span 18 to 38 (FRPEMALTFGTLVLFVLDLVF), 45 to 65 (VALLTAGALAVLAAAAGLLAI), 82 to 102 (AFAIFFKWLFLAAGALTVIIA), 113 to 133 (IGQFFALLMAIVLGMFMMASA), 136 to 156 (LLMVYLSLELVSMVSYVLAGF), 171 to 191 (VIYGGVASGVMLFGMSYLYGL), 220 to 240 (VALVVAIVFVTAGIGYKVAAV), 254 to 274 (PTPFTAFLSVGPKAAGFALAI), 295 to 315 (LAGIPWPAVVGVIAAVTMTLG), 328 to 348 (LLAYSSIAHAGYTLMGLSAVS), 355 to 375 (VMIYMLVYLVMNVGAFLVVIL), 399 to 419 (AVAFAIFLFSLTGLPPFAGFV), 439 to 459 (WYAWLALIGALNTAIALYYYV), and 486 to 506 (VMLGAFSVAILVFGIWWTPMV).

Belongs to the complex I subunit 2 family. NDH-1 is composed of 14 different subunits. Subunits NuoA, H, J, K, L, M, N constitute the membrane sector of the complex.

It is found in the cell inner membrane. The catalysed reaction is a quinone + NADH + 5 H(+)(in) = a quinol + NAD(+) + 4 H(+)(out). Its function is as follows. NDH-1 shuttles electrons from NADH, via FMN and iron-sulfur (Fe-S) centers, to quinones in the respiratory chain. The immediate electron acceptor for the enzyme in this species is believed to be ubiquinone. Couples the redox reaction to proton translocation (for every two electrons transferred, four hydrogen ions are translocated across the cytoplasmic membrane), and thus conserves the redox energy in a proton gradient. This Anaeromyxobacter sp. (strain Fw109-5) protein is NADH-quinone oxidoreductase subunit N.